The chain runs to 334 residues: Malate dehydrogenase, cytoplasmic (334 aa).

Position 11–17 (11–17) interacts with NAD(+); that stretch reads GAAGQIA. Arginine 92 and arginine 98 together coordinate substrate. NAD(+)-binding positions include asparagine 105, glutamine 112, and 129 to 131; that span reads VGN. Substrate contacts are provided by asparagine 131 and arginine 162. The Proton acceptor role is filled by histidine 187.

This sequence belongs to the LDH/MDH superfamily. MDH type 2 family. Homodimer.

It is found in the cytoplasm. The protein localises to the cytosol. The catalysed reaction is (S)-malate + NAD(+) = oxaloacetate + NADH + H(+). It catalyses the reaction (S)-2-hydroxyglutarate + NAD(+) = 2-oxoglutarate + NADH + H(+). Catalyzes the reduction of aromatic alpha-keto acids in the presence of NADH. Plays essential roles in the malate-aspartate shuttle and the tricarboxylic acid cycle, important in mitochondrial NADH supply for oxidative phosphorylation. Catalyzes the reduction of 2-oxoglutarate to 2-hydroxyglutarate, leading to elevated reactive oxygen species (ROS). This is Malate dehydrogenase, cytoplasmic (MDH1) from Gallus gallus (Chicken).